Here is a 362-residue protein sequence, read N- to C-terminus: MAAVTAAAVSTSAAAAVTKASPSPAHCFLPCPPRTRAAHQRGLLLRAQVSTTDAAAVAAAPAKKEKISKKHDEGVVTNKYRPKEPYVGKCLLNTKITADDAPGETWHMVFSTEGEIPYREGQSIGVIADGVDKNGKPHKLRLYSIASSALGDFGDSKTVSLCVKRLVYTNDQGEIVKGVCSNFLCDLKPGSDVKITGPVGKEMLMPKDPNANIIMLATGTGIAPFRSFLWKMFFEKYDDYKFNGLAWLFLGVPTSSSLLYKEEFDKMKAKAPENFRVDYAVSREQTNAQGEKMYIQTRMAEYKEELWELLKKDNTYVYMCGLKGMEKGIDDIMVSLAAKDGIDWADYKKQLKKGEQWNVEVY.

The N-terminal 36 residues, 1–36 (MAAVTAAAVSTSAAAAVTKASPSPAHCFLPCPPRTR), are a transit peptide targeting the chloroplast. The FAD-binding FR-type domain occupies 83–205 (KEPYVGKCLL…TGPVGKEMLM (123 aa)). FAD contacts are provided by residues 141-144 (RLYS), 162-164 (CVK), tyrosine 168, 179-181 (VCS), and threonine 220. 2 residues coordinate NADP(+): serine 144 and lysine 164. A disulfide bridge connects residues cysteine 180 and cysteine 185. Position 181 is a phosphoserine (serine 181). NADP(+) is bound by residues threonine 220, 252–253 (VP), 282–283 (SR), lysine 292, 321–322 (GL), and glutamate 360.

The protein belongs to the ferredoxin--NADP reductase type 1 family. As to quaternary structure, heterodimer with LFNR2. Component of high molecular weight thylakoid LFNRs-containing protein complexes containing LIR1, LFNR1, LFNR2, TIC62 and TROL proteins. Interacts directly with LFNR1 and LFNR2; LIR1 increases the affinity of LFNR1 and LFNR2 for TIC62 and subsequent thylakoid relocalization. FAD serves as cofactor. Post-translationally, may form interchain disulfide bonds with LIR1.

Its subcellular location is the plastid. It is found in the chloroplast stroma. It localises to the chloroplast thylakoid membrane. The catalysed reaction is 2 reduced [2Fe-2S]-[ferredoxin] + NADP(+) + H(+) = 2 oxidized [2Fe-2S]-[ferredoxin] + NADPH. Its pathway is energy metabolism; photosynthesis. Functionally, plays a key role in regulating the relative amounts of cyclic and non-cyclic electron flow to meet the demands of the plant for ATP and reducing power. This Oryza sativa subsp. indica (Rice) protein is Ferredoxin--NADP reductase, leaf isozyme 1, chloroplastic.